The primary structure comprises 298 residues: DNA-binding transcriptional activator HetR (298 aa).

S152 is an active-site residue.

Belongs to the peptidase S48 family. As to quaternary structure, homodimer; disulfide-linked.

Functionally, controls heterocyst differentiation. Dimerization is required for DNA-binding. Has both a protease and a DNA-binding activity. The polypeptide is DNA-binding transcriptional activator HetR (Nostoc sp. (strain PCC 9229)).